We begin with the raw amino-acid sequence, 443 residues long: Tubulin beta-2 chain (443 aa).

The MREI motif signature appears at 1 to 4 (MREI). Residues Gln11, Glu69, Ser138, Gly142, Thr143, Gly144, Asn204, and Asn226 each coordinate GTP. Position 69 (Glu69) interacts with Mg(2+). Residue Glu438 is modified to 5-glutamyl polyglutamate.

Belongs to the tubulin family. As to quaternary structure, dimer of alpha and beta chains. A typical microtubule is a hollow water-filled tube with an outer diameter of 25 nm and an inner diameter of 15 nM. Alpha-beta heterodimers associate head-to-tail to form protofilaments running lengthwise along the microtubule wall with the beta-tubulin subunit facing the microtubule plus end conferring a structural polarity. Microtubules usually have 13 protofilaments but different protofilament numbers can be found in some organisms and specialized cells. Mg(2+) serves as cofactor. Some glutamate residues at the C-terminus are polyglycylated, resulting in polyglycine chains on the gamma-carboxyl group. Glycylation is mainly limited to tubulin incorporated into axonemes (cilia and flagella) whereas glutamylation is prevalent in neuronal cells, centrioles, axonemes, and the mitotic spindle. Both modifications can coexist on the same protein on adjacent residues, and lowering polyglycylation levels increases polyglutamylation, and reciprocally. The precise function of polyglycylation is still unclear. Post-translationally, some glutamate residues at the C-terminus are polyglutamylated, resulting in polyglutamate chains on the gamma-carboxyl group. Polyglutamylation plays a key role in microtubule severing by spastin (SPAST). SPAST preferentially recognizes and acts on microtubules decorated with short polyglutamate tails: severing activity by SPAST increases as the number of glutamates per tubulin rises from one to eight, but decreases beyond this glutamylation threshold. In terms of tissue distribution, nervous system specific.

It localises to the cytoplasm. Its subcellular location is the cytoskeleton. Its function is as follows. Tubulin is the major constituent of microtubules, a cylinder consisting of laterally associated linear protofilaments composed of alpha- and beta-tubulin heterodimers. Microtubules grow by the addition of GTP-tubulin dimers to the microtubule end, where a stabilizing cap forms. Below the cap, tubulin dimers are in GDP-bound state, owing to GTPase activity of alpha-tubulin. In Xenopus laevis (African clawed frog), this protein is Tubulin beta-2 chain (tubb2).